The following is a 155-amino-acid chain: Putative pre-16S rRNA nuclease (155 aa).

Belongs to the YqgF nuclease family.

It localises to the cytoplasm. Functionally, could be a nuclease involved in processing of the 5'-end of pre-16S rRNA. The chain is Putative pre-16S rRNA nuclease from Wolbachia sp. subsp. Drosophila simulans (strain wRi).